The primary structure comprises 900 residues: uncharacterized protein (900 aa).

Over residues 1–16 the composition is skewed to basic and acidic residues; the sequence is MGSNKEAKNIDSKNDR. Disordered regions lie at residues 1–84, 103–160, 512–556, 568–613, and 648–676; these read MGSN…KLSS, NSSR…PDPS, NFNQ…KKSG, LAST…KSAN, and KRSS…NSFP. Residues 17–27 show a composition bias toward polar residues; it reads GLTSITSNKIS. Over residues 30–58 the composition is skewed to basic and acidic residues; sequence KAHDNHTSSMITEHKNADKEKGKQEKESR. Composition is skewed to low complexity over residues 63–76 and 103–127; these read QSSS…PQVS and NSSR…QLSK. The residue at position 105 (S105) is a Phosphoserine. The segment covering 129-143 has biased composition (basic residues); sequence GLHHHHTSNNKHSHR. Positions 528-537 are enriched in low complexity; sequence SSRSLSLPSS. Over residues 543–553 the composition is skewed to basic residues; that stretch reads KRKKSPTKATK. Low complexity-rich tracts occupy residues 570–601 and 665–676; these read STSH…SSPP and SPISSNSDNSFP.

This is an uncharacterized protein from Saccharomyces cerevisiae (strain ATCC 204508 / S288c) (Baker's yeast).